The chain runs to 477 residues: Phosphomethylpyrimidine synthase (477 aa).

Substrate contacts are provided by residues asparagine 67, methionine 96, tyrosine 125, histidine 160, 180-182, 221-224, and glutamate 260; these read SRG and DGLR. Histidine 264 lines the Zn(2+) pocket. Position 287 (tyrosine 287) interacts with substrate. Histidine 328 contributes to the Zn(2+) binding site. [4Fe-4S] cluster contacts are provided by cysteine 408, cysteine 411, and cysteine 416. Over residues 427–440 the composition is skewed to basic and acidic residues; the sequence is AGDGMDGLESRTDL. Residues 427 to 477 are disordered; that stretch reads AGDGMDGLESRTDLDSSAAAAVNRPPTGVHRAEKLDDIPCPVAEDDVAADD.

This sequence belongs to the ThiC family. [4Fe-4S] cluster serves as cofactor.

The catalysed reaction is 5-amino-1-(5-phospho-beta-D-ribosyl)imidazole + S-adenosyl-L-methionine = 4-amino-2-methyl-5-(phosphooxymethyl)pyrimidine + CO + 5'-deoxyadenosine + formate + L-methionine + 3 H(+). Its pathway is cofactor biosynthesis; thiamine diphosphate biosynthesis. In terms of biological role, catalyzes the synthesis of the hydroxymethylpyrimidine phosphate (HMP-P) moiety of thiamine from aminoimidazole ribotide (AIR) in a radical S-adenosyl-L-methionine (SAM)-dependent reaction. The protein is Phosphomethylpyrimidine synthase of Natronomonas pharaonis (strain ATCC 35678 / DSM 2160 / CIP 103997 / JCM 8858 / NBRC 14720 / NCIMB 2260 / Gabara) (Halobacterium pharaonis).